We begin with the raw amino-acid sequence, 1492 residues long: Cystic fibrosis transmembrane conductance regulator (1492 aa).

The Cytoplasmic segment spans residues 1–78 (MQRSPIEKAN…KLVNALRRCF (78 aa)). Residues 79 to 99 (FWRFLFYGILLYFVEFTKAVQ) traverse the membrane as a helical segment. The ABC transmembrane type-1 1 domain maps to 82–366 (FLFYGILLYF…SAIQTWYDSL (285 aa)). The Extracellular portion of the chain corresponds to 100 to 123 (PLCLGRIIASYNAKNTYEREIAYY). The chain crosses the membrane as a helical span at residues 124 to 147 (LALGLCLLFVVRTLFLHPAVFGLQ). Residues 148 to 196 (HLGMQMRIALFSLIYKKILKMSSRVLDKIDTGQLVSLLSNNLNKFDEGV) lie on the Cytoplasmic side of the membrane. Residues 197 to 217 (AVAHFVWIAPVQVVLLMGLIW) form a helical membrane-spanning segment. The Extracellular segment spans residues 218–223 (NELTEF). Residues 224-244 (VFCGLGFLIMLALFQAWLGKK) form a helical membrane-spanning segment. Over 245-299 (MMQYRDKRAGKINERLAITSEIIDNIQSVKVYCWEDAMEKIIDDIRQVELKLTRK) the chain is Cytoplasmic. A helical membrane pass occupies residues 300–320 (VAYCRYFSSSAFFFSGFFVVF). Residues 321–340 (LSVVPYAFIHTIKLRRIFTT) lie on the Extracellular side of the membrane. The chain crosses the membrane as a helical span at residues 341–359 (ISYNIVLRMTVTRQFPSAI). Topologically, residues 360 to 867 (QTWYDSLGAI…YLRYVTTNRN (508 aa)) are cytoplasmic. ATP contacts are provided by residues tryptophan 402, serine 435, 459–466 (GSTGSGKS), and glutamine 494. Residues 424-647 (NGDDGLFFSN…KPDFSSQLLG (224 aa)) form the ABC transporter 1 domain. Residues 655-840 (SAERRNSILT…EEINEEDLKE (186 aa)) form a disordered R region region. The chain crosses the membrane as a helical span at residues 868–888 (LVFVLILCLVIFLAEVAASLA). The ABC transmembrane type-1 2 domain maps to 868 to 1169 (LVFVLILCLV…AVNSSIDVDG (302 aa)). The Extracellular segment spans residues 889 to 932 (GLWIISGLAINTGSQTNDTSTDLSHLSVFSKFITNGSHYYIFYI). Asparagine 905 and asparagine 923 each carry an N-linked (GlcNAc...) asparagine glycan. The chain crosses the membrane as a discontinuously helical span at residues 933–953 (YVGLADSFLALGVIRGLPLVH). Topologically, residues 954-1004 (TLVTVSKDLHKQMLHSVLQGPMTAFNKMKAGRILNRFIKDTAIIDDMLPLT) are cytoplasmic. The helical transmembrane segment at 1005–1025 (VFDFVQLILIVVGAICVVSVL) threads the bilayer. The Extracellular segment spans residues 1026-1027 (QP). Residues 1028-1048 (YTLLAAIPVAVIFIMLRAYFL) traverse the membrane as a helical segment. Over 1049–1109 (RTSQQLKQLE…TANWFLYLST (61 aa)) the chain is Cytoplasmic. A helical membrane pass occupies residues 1110–1130 (LRWFQMRIDIVFVLFFIAVTF). Over 1131–1144 (IAIATHDVGEGQVG) the chain is Extracellular. A helical transmembrane segment spans residues 1145–1165 (IILTLAMNITSTLQWAVNSSI). Topologically, residues 1166 to 1492 (DVDGLMRSVS…AEEDLQETRL (327 aa)) are cytoplasmic. The ABC transporter 2 domain maps to 1220 to 1453 (MMVNNLTAKY…ASLFKQVFGH (234 aa)). ATP contacts are provided by residues tyrosine 1229 and 1254–1261 (GRTGAGKS). Positions 1465–1474 (RNSSKRKTRP) are enriched in basic residues. A disordered region spans residues 1465-1492 (RNSSKRKTRPKISALQEEAEEDLQETRL). The segment covering 1481-1492 (EEAEEDLQETRL) has biased composition (acidic residues). The short motif at 1483–1485 (AEE) is the PDZ-binding element.

This sequence belongs to the ABC transporter superfamily. ABCC family. CFTR transporter (TC 3.A.1.202) subfamily. As to quaternary structure, monomer; does not require oligomerization for channel activity. May form oligomers in the membrane. Phosphorylated; cAMP treatment promotes phosphorylation and activates the channel. Dephosphorylation decreases the ATPase activity (in vitro). Phosphorylation at PKA sites activates the channel. Phosphorylation at PKC sites enhances the response to phosphorylation by PKA. In terms of tissue distribution, expressed in the rectal gland (at protein level).

The protein localises to the apical cell membrane. It is found in the early endosome membrane. The protein resides in the cell membrane. Its subcellular location is the recycling endosome membrane. It localises to the endoplasmic reticulum membrane. It catalyses the reaction ATP + H2O + closed Cl(-) channel = ADP + phosphate + open Cl(-) channel.. The catalysed reaction is chloride(in) = chloride(out). It carries out the reaction hydrogencarbonate(in) = hydrogencarbonate(out). The enzyme catalyses ATP + H2O = ADP + phosphate + H(+). In terms of biological role, epithelial ion channel that plays an important role in the regulation of epithelial ion and water transport and fluid homeostasis. Mediates the transport of chloride ions across the cell membrane. Possesses an intrinsic ATPase activity and utilizes ATP to gate its channel; the passive flow of anions through the channel is gated by cycles of ATP binding and hydrolysis by the ATP-binding domains. The ion channel is also permeable to HCO(3)(-); selectivity depends on the extracellular chloride concentration. Exerts its function also by modulating the activity of other ion channels and transporters. Contributes to the regulation of the pH and the ion content of the epithelial fluid layer. The polypeptide is Cystic fibrosis transmembrane conductance regulator (Squalus acanthias (Spiny dogfish)).